The primary structure comprises 33 residues: MIDYVGLFIGAYIMGFALFYGIGFFKSIAERIV.

The helical transmembrane segment at 5-25 (VGLFIGAYIMGFALFYGIGFF) threads the bilayer.

The protein belongs to the inovirus G9P protein family.

The protein localises to the virion. The protein resides in the host membrane. May initiate with G7P the virion concomitant assembly-budding process, by interacting with the packaging signal of the viral genome. The assembly-budding takes place at the host inner membrane. In turn, G7P and G9P are present at the end of the filamentous virion that emerges first from the bacterial host. This is Tail virion protein G9P (IX) from Escherichia coli (Bacteriophage I2-2).